Here is a 243-residue protein sequence, read N- to C-terminus: tRNA (guanine-N(1)-)-methyltransferase (243 aa).

S-adenosyl-L-methionine-binding positions include glycine 108 and 127 to 132 (LGDFVL).

This sequence belongs to the RNA methyltransferase TrmD family. In terms of assembly, homodimer.

It localises to the cytoplasm. The catalysed reaction is guanosine(37) in tRNA + S-adenosyl-L-methionine = N(1)-methylguanosine(37) in tRNA + S-adenosyl-L-homocysteine + H(+). Specifically methylates guanosine-37 in various tRNAs. The chain is tRNA (guanine-N(1)-)-methyltransferase from Streptococcus pyogenes serotype M2 (strain MGAS10270).